A 164-amino-acid chain; its full sequence is FMN reductase (NADH) RutF (164 aa).

The protein belongs to the non-flavoprotein flavin reductase family. RutF subfamily.

It catalyses the reaction FMNH2 + NAD(+) = FMN + NADH + 2 H(+). Catalyzes the reduction of FMN to FMNH2 which is used to reduce pyrimidine by RutA via the Rut pathway. The polypeptide is FMN reductase (NADH) RutF (Klebsiella pneumoniae (strain 342)).